The following is a 148-amino-acid chain: Large ribosomal subunit protein bL9 (148 aa).

This sequence belongs to the bacterial ribosomal protein bL9 family.

Functionally, binds to the 23S rRNA. The polypeptide is Large ribosomal subunit protein bL9 (Bacillus cytotoxicus (strain DSM 22905 / CIP 110041 / 391-98 / NVH 391-98)).